The primary structure comprises 473 residues: Cardiolipin synthase C (473 aa).

2 consecutive PLD phosphodiesterase domains span residues 125–152 (LNRR…GDAY) and 364–391 (SGAS…DPRS). Catalysis depends on residues His-130, Lys-132, Asp-137, His-369, Lys-371, and Asp-376.

This sequence belongs to the phospholipase D family. Cardiolipin synthase subfamily. ClsC sub-subfamily.

The enzyme catalyses a 1,2-diacyl-sn-glycero-3-phospho-(1'-sn-glycerol) + a 1,2-diacyl-sn-glycero-3-phosphoethanolamine = a cardiolipin + ethanolamine. With respect to regulation, full activity requires coexpression with the neighboring gene ymdB. Its function is as follows. Catalyzes the synthesis of cardiolipin (CL) (diphosphatidylglycerol) from phosphatidylglycerol (PG) and phosphatidylethanolamine (PE). In Escherichia coli (strain K12), this protein is Cardiolipin synthase C.